Consider the following 538-residue polypeptide: Phosphoenolpyruvate carboxykinase (ATP) (538 aa).

Residues Arg-61, Tyr-195, and Lys-201 each contribute to the substrate site. Residues Lys-201, His-220, and 236 to 244 each bind ATP; that span reads GLSGTGKTT. Mn(2+) is bound by residues Lys-201 and His-220. Residue Asp-257 participates in Mn(2+) binding. 3 residues coordinate ATP: Glu-285, Arg-323, and Thr-449. Arg-323 is a binding site for substrate.

The protein belongs to the phosphoenolpyruvate carboxykinase (ATP) family. Requires Mn(2+) as cofactor.

It localises to the cytoplasm. It carries out the reaction oxaloacetate + ATP = phosphoenolpyruvate + ADP + CO2. Its pathway is carbohydrate biosynthesis; gluconeogenesis. Its function is as follows. Involved in the gluconeogenesis. Catalyzes the conversion of oxaloacetate (OAA) to phosphoenolpyruvate (PEP) through direct phosphoryl transfer between the nucleoside triphosphate and OAA. This chain is Phosphoenolpyruvate carboxykinase (ATP), found in Nitrobacter winogradskyi (strain ATCC 25391 / DSM 10237 / CIP 104748 / NCIMB 11846 / Nb-255).